Here is a 435-residue protein sequence, read N- to C-terminus: 5-methylthioadenosine/S-adenosylhomocysteine deaminase (435 aa).

Residues His-65 and His-67 each contribute to the Zn(2+) site. The substrate site is built by Glu-94, Arg-150, and His-189. Zn(2+) is bound at residue His-216. 2 residues coordinate substrate: Glu-219 and Asp-304. Asp-304 provides a ligand contact to Zn(2+).

It belongs to the metallo-dependent hydrolases superfamily. MTA/SAH deaminase family. It depends on Zn(2+) as a cofactor.

It carries out the reaction S-adenosyl-L-homocysteine + H2O + H(+) = S-inosyl-L-homocysteine + NH4(+). The catalysed reaction is S-methyl-5'-thioadenosine + H2O + H(+) = S-methyl-5'-thioinosine + NH4(+). In terms of biological role, catalyzes the deamination of 5-methylthioadenosine and S-adenosyl-L-homocysteine into 5-methylthioinosine and S-inosyl-L-homocysteine, respectively. Is also able to deaminate adenosine. The sequence is that of 5-methylthioadenosine/S-adenosylhomocysteine deaminase from Bacillus cytotoxicus (strain DSM 22905 / CIP 110041 / 391-98 / NVH 391-98).